The chain runs to 102 residues: Large ribosomal subunit protein uL24 (102 aa).

The protein belongs to the universal ribosomal protein uL24 family. In terms of assembly, part of the 50S ribosomal subunit.

One of two assembly initiator proteins, it binds directly to the 5'-end of the 23S rRNA, where it nucleates assembly of the 50S subunit. In terms of biological role, one of the proteins that surrounds the polypeptide exit tunnel on the outside of the subunit. The chain is Large ribosomal subunit protein uL24 from Macrococcus caseolyticus (strain JCSC5402) (Macrococcoides caseolyticum).